A 448-amino-acid chain; its full sequence is Probable glycine dehydrogenase (decarboxylating) subunit 1 (448 aa).

The protein belongs to the GcvP family. N-terminal subunit subfamily. The glycine cleavage system is composed of four proteins: P, T, L and H. In this organism, the P 'protein' is a heterodimer of two subunits.

The catalysed reaction is N(6)-[(R)-lipoyl]-L-lysyl-[glycine-cleavage complex H protein] + glycine + H(+) = N(6)-[(R)-S(8)-aminomethyldihydrolipoyl]-L-lysyl-[glycine-cleavage complex H protein] + CO2. The glycine cleavage system catalyzes the degradation of glycine. The P protein binds the alpha-amino group of glycine through its pyridoxal phosphate cofactor; CO(2) is released and the remaining methylamine moiety is then transferred to the lipoamide cofactor of the H protein. In Bacillus velezensis (strain DSM 23117 / BGSC 10A6 / LMG 26770 / FZB42) (Bacillus amyloliquefaciens subsp. plantarum), this protein is Probable glycine dehydrogenase (decarboxylating) subunit 1.